A 526-amino-acid polypeptide reads, in one-letter code: Phosphoenolpyruvate carboxylase (526 aa).

This sequence belongs to the PEPCase type 2 family. In terms of assembly, homotetramer. The cofactor is Mg(2+).

The catalysed reaction is oxaloacetate + phosphate = phosphoenolpyruvate + hydrogencarbonate. In terms of biological role, catalyzes the irreversible beta-carboxylation of phosphoenolpyruvate (PEP) to form oxaloacetate (OAA), a four-carbon dicarboxylic acid source for the tricarboxylic acid cycle. The protein is Phosphoenolpyruvate carboxylase of Methanosarcina mazei (strain ATCC BAA-159 / DSM 3647 / Goe1 / Go1 / JCM 11833 / OCM 88) (Methanosarcina frisia).